Consider the following 343-residue polypeptide: Ferredoxin--NADP reductase (343 aa).

FAD is bound by residues C18, D37, Q45, Y50, V90, F125, D290, and T331.

This sequence belongs to the ferredoxin--NADP reductase type 2 family. Homodimer. The cofactor is FAD.

It catalyses the reaction 2 reduced [2Fe-2S]-[ferredoxin] + NADP(+) + H(+) = 2 oxidized [2Fe-2S]-[ferredoxin] + NADPH. In Parvibaculum lavamentivorans (strain DS-1 / DSM 13023 / NCIMB 13966), this protein is Ferredoxin--NADP reductase.